The following is a 783-amino-acid chain: Transcription factor E4F1 (783 aa).

Positions 40-84 (GFLGLPAPFSEEDEDDVHRCGRCQVEFTALEDFVQHKIQKTCHRA) are required for ubiquitin ligase activity. The residue at position 49 (serine 49) is a Phosphoserine. The tract at residues 185–264 (LLVNKEGRYV…GKSFRESGAL (80 aa)) is mediates dimerization, DNA-binding, transcription repression of CCNA2 and interaction with HMGA2. C2H2-type zinc fingers lie at residues 193–215 (YVCM…MVTH) and 221–243 (HECK…HRRH). The segment at 249-273 (YKCAKCGKSFRESGALTRHLKSLTP) adopts a C2H2-type 3; degenerate zinc-finger fold. The interval 368–565 (NLLHQAMQNS…REKGSLVRHV (198 aa)) is mediates interaction with CDKN2A. Residues 386-407 (GEESALEPAPPSGSSPQCLGDG) form a disordered region. C2H2-type zinc fingers lie at residues 434 to 456 (HPCP…KRGH), 462 to 484 (FTCT…QEVH), 490 to 512 (FRCG…RRVH), 518 to 540 (FPCP…FRTH), and 546 to 568 (HVCQ…VRHH). Residues 434 to 598 (HPCPQCSETF…LNRHLRTKGG (165 aa)) form an interaction with BMI1 region. The segment at 520–579 (CPQCGKRYKTKNAQQVHFRTHLEEKPHVCQFCSRGFREKGSLVRHVRHHTGEKPFKCYKC) is mediates interaction with TP53. Residues 574-596 (FKCYKCGRGFAEHGTLNRHLRTK) form a C2H2-type 9; degenerate zinc finger. The mediates interaction with RASSF1 stretch occupies residues 574–596 (FKCYKCGRGFAEHGTLNRHLRTK).

As to quaternary structure, homodimer; binds DNA as a dimer. Forms a complex with CDKN2A and TP53. Interacts with HDAC1, HMGA2 and RASSF1. Interactions with TP53, RB1, ANP32A and probably BMI1 and FHL2 regulate E4F1 activity. In terms of processing, phosphorylated; phosphorylation is cell cycle-dependent and regulates DNA-binding activity and function. May be sumoylated by UBE2I upon interaction with CDKN2A. Ubiquitously expressed.

Its subcellular location is the nucleus. The protein resides in the nucleoplasm. The protein localises to the cytoplasm. The catalysed reaction is S-ubiquitinyl-[E2 ubiquitin-conjugating enzyme]-L-cysteine + [acceptor protein]-L-lysine = [E2 ubiquitin-conjugating enzyme]-L-cysteine + N(6)-ubiquitinyl-[acceptor protein]-L-lysine.. The protein operates within protein modification; protein ubiquitination. May function as a transcriptional repressor. May also function as a ubiquitin ligase mediating ubiquitination of chromatin-associated TP53. Functions in cell survival and proliferation through control of the cell cycle. Functions in the p53 and pRB tumor suppressor pathways and regulates the cyclin CCNA2 transcription. The sequence is that of Transcription factor E4F1 (E4f1) from Mus musculus (Mouse).